The sequence spans 578 residues: Putative multidrug export ATP-binding/permease protein SAB1799c (578 aa).

At 1–15 the chain is on the cytoplasmic side; that stretch reads MIKRYLQFVKPYKYR. The chain crosses the membrane as a helical span at residues 16–36; sequence IFATIIVGIIKFGIPMLIPLL. In terms of domain architecture, ABC transmembrane type-1 spans 16 to 306; that stretch reads IFATIIVGII…LVASFTTLTQ (291 aa). Topologically, residues 37-59 are extracellular; sequence IKYAIDGVINNHALTTDEKVHHL. The helical transmembrane segment at 60–80 threads the bilayer; sequence TIAIGIALFIFVIVRPPIEFI. The Cytoplasmic portion of the chain corresponds to 81 to 138; that stretch reads RQYLAQWTSNKILYDIRKKLYNHLQALSARFYANNQVGQVISRVINDVEQTKDFILTG. Residues 139 to 159 traverse the membrane as a helical segment; it reads LMNIWLDCITIIIALSIMFFL. Residues 160–162 are Extracellular-facing; the sequence is DVK. A helical membrane pass occupies residues 163–183; the sequence is LTLAALFIFPFYILTVYVFFG. The Cytoplasmic portion of the chain corresponds to 184–242; that stretch reads RLRKLTRERSQALAEVQGFLHERVQGISVVKSFAIEDNEAKNFDKKNANFLTRALKHTR. Residues 243-262 traverse the membrane as a helical segment; the sequence is WNAYSFATINTVTDIGPIIV. Residues 263–267 lie on the Extracellular side of the membrane; the sequence is IGVGA. A helical transmembrane segment spans residues 268–287; sequence YLAISGSITVGTLAAFVGYL. Residues 288–578 lie on the Cytoplasmic side of the membrane; the sequence is ELLFGPLRRL…YEHLYSIQNL (291 aa). The 236-residue stretch at 340–575 folds into the ABC transporter domain; it reads IDIYHVNFQY…QGAYEHLYSI (236 aa). Residue 374-381 coordinates ATP; that stretch reads GMSGGGKS.

Belongs to the ABC transporter superfamily. In terms of assembly, homodimer.

It localises to the cell membrane. In terms of biological role, may be involved in multidrug export. Transmembrane domains (TMD) form a pore in the cell membrane and the ATP-binding domain (NBD) is responsible for energy generation. This Staphylococcus aureus (strain bovine RF122 / ET3-1) protein is Putative multidrug export ATP-binding/permease protein SAB1799c.